Reading from the N-terminus, the 312-residue chain is Malate dehydrogenase (312 aa).

NAD(+)-binding positions include 7–13 (GAAGGIG) and D34. The substrate site is built by R81 and R87. Residues N94 and 117–119 (ITN) each bind NAD(+). 2 residues coordinate substrate: N119 and R153. Catalysis depends on H177, which acts as the Proton acceptor. Residue M227 coordinates NAD(+).

This sequence belongs to the LDH/MDH superfamily. MDH type 1 family. Homodimer.

The catalysed reaction is (S)-malate + NAD(+) = oxaloacetate + NADH + H(+). In terms of biological role, catalyzes the reversible oxidation of malate to oxaloacetate. The sequence is that of Malate dehydrogenase from Serratia proteamaculans (strain 568).